Here is a 319-residue protein sequence, read N- to C-terminus: ATP-dependent 6-phosphofructokinase (319 aa).

Position 11 (Gly-11) interacts with ATP. 21–25 lines the ADP pocket; that stretch reads RAVVR. ATP contacts are provided by residues 72–73 and 102–105; these read RC and GDGS. Mg(2+) is bound at residue Asp-103. Residue 125–127 participates in substrate binding; the sequence is TID. Asp-127 acts as the Proton acceptor in catalysis. Arg-154 is an ADP binding site. Substrate-binding positions include Arg-162 and 169-171; that span reads MGR. Residues 185–187, Arg-211, and 213–215 contribute to the ADP site; these read GAE and KKH. Residues Glu-222, Arg-243, and 249–252 contribute to the substrate site; that span reads HVQR.

It belongs to the phosphofructokinase type A (PFKA) family. ATP-dependent PFK group I subfamily. Prokaryotic clade 'B1' sub-subfamily. In terms of assembly, homotetramer. The cofactor is Mg(2+).

Its subcellular location is the cytoplasm. The catalysed reaction is beta-D-fructose 6-phosphate + ATP = beta-D-fructose 1,6-bisphosphate + ADP + H(+). It functions in the pathway carbohydrate degradation; glycolysis; D-glyceraldehyde 3-phosphate and glycerone phosphate from D-glucose: step 3/4. With respect to regulation, allosterically activated by ADP and other diphosphonucleosides, and allosterically inhibited by phosphoenolpyruvate. In terms of biological role, catalyzes the phosphorylation of D-fructose 6-phosphate to fructose 1,6-bisphosphate by ATP, the first committing step of glycolysis. The protein is ATP-dependent 6-phosphofructokinase of Geobacillus sp. (strain WCH70).